The chain runs to 1414 residues: MKALLDLFKQVSQDEQFDAIKIGIASPEKIRSWSFGEVRKPETINYRTFKPERDGLFCAKIFGPIKDYECLCGKYKRLKHRGVICEKCGVEVTVAKVRRERMGHIELASPVAHIWFLKSLPSRLGMVLDMTLRDIERVLYFEAWCVIEPGMTPLKRGQIMSDDDFLAKTEEYGDDFRALMGAEAVRELLRTIDIDREVETLRGELKATSSEAKIKKISKRLKVLEGFQKSGIKAEWMVMEVLPVLPPDLRPLVPLDGGRFATSDLNDLYRRVINRNNRLKRLLELKAPEIILRNEKRMLQEAVDSLLDNGRRGKAMTGANKRQLKSLADMIKGKSGRFRQNLLGKRVDYSGRSVIVVGPQLKLHQCGLPKLMALELFKPFIFNRLEMMGLATTIKAAKKLVESQEPVVWDILEEVIREHPVMLNRAPTLHRLGIQAFEPVLIEGKAIQLHPLVCAAFNADFDGDQMAVHVPLSLEAQLEARTLMLASNNVLFPANGEPSIVPSQDIVLGLYYTTRERINGKGEGIFFADVSEVQRAYDNGEVELQTRITVRLTEYERDEQGEWQPVKHRHETTVGRALLSEILPKGLPFTVLNKALKKKEISRLINQSFRRCGLRDTVIFADKLMQSGFRLATRGGISIAMEDMLIPKAKEGILAEASREVKEIDKQYSSGLVTSQERYNNVVDIWGKAGDKVGKAMMEQLATEPVVNRHGEEVRQESFNSIYMMADSGARGSAAQIRQLAGMRGLMAKPDGSIIETPITANFREGLNVLQYFISTHGARKGLADTALKTANSGYLTRRLVDVTQDLVITEDDCGTSHGYAMKALVEGGEVIEPLRDRILGRVAAIDVVNPDTQETAIAAGTLLDEDLVDLIDRLGVDEVKVRTPLTCETRHGLCAHCYGRDLGRGSHVNVGEAVGVIAAQSIGEPGTQLTMRTFHIGGAASRSALASAVETKSNGTVGFASTMRYVTNAKGERVAISRSGELAIFDDNGRERERHKIPYGATVLVGDGEAVKAGTRLASWDPLTRPIVSEYSGAVRFENIEEGVTVAKQVDEVTGLSTLVVITPKTRGGKIVMRPQIKLVNENGEDVKIAGTDHSVNISFPVGALITVRDGQQVAVGEVLARIPQESQKTRDITGGLPRVAELFEARSPKDAGMLAEVTGTVSFGKDTKGKQRLVITDLEGVSHEFLILKEKQVLVHDGQVVNKGEMIVDGPADPHDILRLQGIEKLATYIVDEVQDVYRLQGVKINDKHIEVIVRQMLRRVNIVDPGDTEFIPGEQVERSELLNENDRVVAEDKRPASYDNVLLGITKASLSTDSFISAASFQETTRVLTEAAIMGKRDDLRGLKENVIVGRLIPAGTGLAYHIARKDKEALEAAEREAARQLANPFEDAPVTVGGEPEAPAADTPSDDSAE.

Residues C70, C72, C85, and C88 each coordinate Zn(2+). Mg(2+) contacts are provided by D460, D462, and D464. Positions 814, 888, 895, and 898 each coordinate Zn(2+). Positions E1378–E1414 are disordered.

The protein belongs to the RNA polymerase beta' chain family. The RNAP catalytic core consists of 2 alpha, 1 beta, 1 beta' and 1 omega subunit. When a sigma factor is associated with the core the holoenzyme is formed, which can initiate transcription. Mg(2+) serves as cofactor. The cofactor is Zn(2+).

It catalyses the reaction RNA(n) + a ribonucleoside 5'-triphosphate = RNA(n+1) + diphosphate. DNA-dependent RNA polymerase catalyzes the transcription of DNA into RNA using the four ribonucleoside triphosphates as substrates. The polypeptide is DNA-directed RNA polymerase subunit beta' (Bordetella bronchiseptica (strain ATCC BAA-588 / NCTC 13252 / RB50) (Alcaligenes bronchisepticus)).